Reading from the N-terminus, the 187-residue chain is MTGSVDRPDQNRGERSMKSPGLDLVRRTLDEARAAARARGQDAGRGRVASVASGRVAGRRRSWSGPGPDIRDPQPLGKAARELAKKRGWSVRVAEGMVLGQWSAVVGHQIAEHARPTALNDGVLSVIAESTAWATQLRIMQAQLLAKIAAAVGNDVVRSLKITGPAAPSWRKGPRHIAGRGPRDTYG.

Basic and acidic residues-rich tracts occupy residues 1–17 (MTGS…ERSM) and 24–45 (LVRR…DAGR). 2 disordered regions span residues 1–75 (MTGS…DPQP) and 168–187 (PSWR…DTYG).

This sequence belongs to the UPF0232 family.

This Mycobacterium bovis (strain BCG / Tokyo 172 / ATCC 35737 / TMC 1019) protein is UPF0232 protein JTY_0004.